Reading from the N-terminus, the 908-residue chain is DNA mismatch repair protein MutS (908 aa).

629 to 636 serves as a coordination point for ATP; that stretch reads GPNMAGKS. The segment at 822–863 is disordered; it reads ADEADGAPSEDPPSEDPPSGDGVRAKKGEADAVPDLEDSQAN.

It belongs to the DNA mismatch repair MutS family.

Its function is as follows. This protein is involved in the repair of mismatches in DNA. It is possible that it carries out the mismatch recognition step. This protein has a weak ATPase activity. In Salinibacter ruber (strain DSM 13855 / M31), this protein is DNA mismatch repair protein MutS.